The sequence spans 137 residues: UPF0768 protein C1952.04c (137 aa).

Over residues 79–93 (QRRRREDLPTPERPE) the composition is skewed to basic and acidic residues. Residues 79-137 (QRRRREDLPTPERPEASAQQHAFFPGSSSQQTDIPNVRPQPHIPPPRKSDEAPPPYSYK) form a disordered region. The span at 119–137 (PHIPPPRKSDEAPPPYSYK) shows a compositional bias: pro residues.

This sequence belongs to the UPF0768 family.

The sequence is that of UPF0768 protein C1952.04c from Schizosaccharomyces pombe (strain 972 / ATCC 24843) (Fission yeast).